We begin with the raw amino-acid sequence, 989 residues long: Phosphoenolpyruvate carboxylase (989 aa).

Active-site residues include His175 and Lys630.

It belongs to the PEPCase type 1 family. Mg(2+) is required as a cofactor.

It carries out the reaction oxaloacetate + phosphate = phosphoenolpyruvate + hydrogencarbonate. Functionally, forms oxaloacetate, a four-carbon dicarboxylic acid source for the tricarboxylic acid cycle. This Prochlorococcus marinus (strain MIT 9515) protein is Phosphoenolpyruvate carboxylase.